Reading from the N-terminus, the 328-residue chain is L-lactate dehydrogenase (328 aa).

NAD(+) contacts are provided by residues Val-18, Glu-39, Lys-46, Tyr-71, and Gly-85–Ala-86. Residues Gln-88 and Arg-94 each contribute to the substrate site. NAD(+)-binding positions include Ser-107, Ala-124–Asn-126, and Ser-149. Residue Asn-126–Asp-129 participates in substrate binding. Position 154-157 (Asp-154–Arg-157) interacts with substrate. Positions 159 and 174 each coordinate beta-D-fructose 1,6-bisphosphate. The active-site Proton acceptor is His-181. At Tyr-226 the chain carries Phosphotyrosine. Thr-235 contacts substrate.

The protein belongs to the LDH/MDH superfamily. LDH family. Homotetramer.

The protein resides in the cytoplasm. It catalyses the reaction (S)-lactate + NAD(+) = pyruvate + NADH + H(+). The protein operates within fermentation; pyruvate fermentation to lactate; (S)-lactate from pyruvate: step 1/1. With respect to regulation, allosterically activated by fructose 1,6-bisphosphate (FBP). Its function is as follows. Catalyzes the conversion of lactate to pyruvate. In Streptococcus pneumoniae (strain 70585), this protein is L-lactate dehydrogenase.